The chain runs to 183 residues: MKNVTHSFVFLAHWPSAGSFGLNTDILATNLINLTVVVGVLIFFGKGVLKDLLDNRKQRILSTIRNSEELRRGTIEQLEKARIRLQKVELEADEYRMNGYSEIEREKANLINATSISLEQLEKSKNETLYFEKQRAMNQVRQRVFQQAVQGALGTLNSCLNTELHFRTIRANIGILGSLEWKR.

A helical membrane pass occupies residues 27-49; it reads LATNLINLTVVVGVLIFFGKGVL.

Belongs to the ATPase B chain family. In terms of assembly, F-type ATPases have 2 components, F(1) - the catalytic core - and F(0) - the membrane proton channel. F(1) has five subunits: alpha(3), beta(3), gamma(1), delta(1), epsilon(1). F(0) has four main subunits: a(1), b(1), b'(1) and c(10-14). The alpha and beta chains form an alternating ring which encloses part of the gamma chain. F(1) is attached to F(0) by a central stalk formed by the gamma and epsilon chains, while a peripheral stalk is formed by the delta, b and b' chains.

It localises to the plastid. The protein resides in the chloroplast thylakoid membrane. Its function is as follows. F(1)F(0) ATP synthase produces ATP from ADP in the presence of a proton or sodium gradient. F-type ATPases consist of two structural domains, F(1) containing the extramembraneous catalytic core and F(0) containing the membrane proton channel, linked together by a central stalk and a peripheral stalk. During catalysis, ATP synthesis in the catalytic domain of F(1) is coupled via a rotary mechanism of the central stalk subunits to proton translocation. Functionally, component of the F(0) channel, it forms part of the peripheral stalk, linking F(1) to F(0). This chain is ATP synthase subunit b, chloroplastic, found in Hordeum vulgare (Barley).